A 329-amino-acid chain; its full sequence is Coiled-coil domain-containing protein 54 (329 aa).

Positions 86–149 (NIVSSISNIQ…VTELESQNSY (64 aa)) form a coiled coil. Residues 178 to 191 (TPKGTATSPDTVIS) are compositionally biased toward polar residues. Positions 178-214 (TPKGTATSPDTVISSAEPERVSSYPEPTGELKKKTTS) are disordered. Position 182 is a phosphothreonine (threonine 182).

This chain is Coiled-coil domain-containing protein 54 (Ccdc54), found in Mus musculus (Mouse).